The sequence spans 80 residues: Adipogenin (80 aa).

The chain crosses the membrane as a helical span at residues Phe16–Leu36. At Ser63 the chain carries Phosphoserine.

The protein belongs to the adipogenin family. As to expression, selectively expressed in adipose tissue where it is particularly enriched in brown adipose tissue. In adipose tissue, expressed exclusively in adipocytes and not in the stromal-vascular cell population. Expressed at much lower levels in heart, stomach and muscle and barely detected in kidney and lung.

The protein localises to the membrane. It localises to the nucleus. Plays a role in stimulating adipocyte differentiation and development. This Mus musculus (Mouse) protein is Adipogenin (Adig).